A 388-amino-acid chain; its full sequence is Succinate--CoA ligase [ADP-forming] subunit beta (388 aa).

Residues 9–244 enclose the ATP-grasp domain; it reads KQLFAEYGLP…PSQDDPREAH (236 aa). Residues Lys46, 53–55, Glu99, Thr102, and Glu107 each bind ATP; that span reads GRG. Mg(2+) is bound by residues Asn199 and Asp213. Substrate is bound by residues Asn264 and 321–323; that span reads GIV.

It belongs to the succinate/malate CoA ligase beta subunit family. In terms of assembly, heterotetramer of two alpha and two beta subunits. Mg(2+) is required as a cofactor.

It catalyses the reaction succinate + ATP + CoA = succinyl-CoA + ADP + phosphate. It carries out the reaction GTP + succinate + CoA = succinyl-CoA + GDP + phosphate. It functions in the pathway carbohydrate metabolism; tricarboxylic acid cycle; succinate from succinyl-CoA (ligase route): step 1/1. In terms of biological role, succinyl-CoA synthetase functions in the citric acid cycle (TCA), coupling the hydrolysis of succinyl-CoA to the synthesis of either ATP or GTP and thus represents the only step of substrate-level phosphorylation in the TCA. The beta subunit provides nucleotide specificity of the enzyme and binds the substrate succinate, while the binding sites for coenzyme A and phosphate are found in the alpha subunit. The polypeptide is Succinate--CoA ligase [ADP-forming] subunit beta (Pseudomonas syringae pv. syringae (strain B728a)).